Reading from the N-terminus, the 190-residue chain is Heme-binding protein 1 (190 aa).

The protein belongs to the HEBP family. Monomer. Ubiquitously expressed. Extremely abundant in liver.

It localises to the cytoplasm. In terms of biological role, may bind free porphyrinogens that may be present in the cell and thus facilitate removal of these potentially toxic compound. Binds with a high affinity to one molecule of heme or porphyrins. It binds metalloporphyrins, free porphyrins and N-methylprotoporphyrin with similar affinities. In Mus musculus (Mouse), this protein is Heme-binding protein 1 (Hebp1).